A 252-amino-acid polypeptide reads, in one-letter code: Cytochrome b6-f complex iron-sulfur subunit, chloroplastic (252 aa).

The helical transmembrane segment at 94–114 (LVLAAVAPVVASAGGCYLYYF) threads the bilayer. Positions 141-235 (WFKSHKKNAR…VEDDNGKILL (95 aa)) constitute a Rieske domain. [2Fe-2S] cluster is bound by residues C181, H183, C199, and H202. C186 and C201 are disulfide-bonded.

It belongs to the Rieske iron-sulfur protein family. In terms of assembly, the 4 large subunits of the cytochrome b6-f complex are cytochrome b6, subunit IV (17 kDa polypeptide, petD), cytochrome f and the Rieske protein, while the 4 small subunits are petG, petL, petM and petN. The complex functions as a dimer. Requires [2Fe-2S] cluster as cofactor.

It localises to the plastid. It is found in the chloroplast thylakoid membrane. It carries out the reaction 2 oxidized [plastocyanin] + a plastoquinol + 2 H(+)(in) = 2 reduced [plastocyanin] + a plastoquinone + 4 H(+)(out). Component of the cytochrome b6-f complex, which mediates electron transfer between photosystem II (PSII) and photosystem I (PSI), cyclic electron flow around PSI, and state transitions. This is Cytochrome b6-f complex iron-sulfur subunit, chloroplastic (petC) from Bigelowiella natans (Pedinomonas minutissima).